We begin with the raw amino-acid sequence, 1016 residues long: Formate dehydrogenase-O major subunit (1016 aa).

Positions 1 to 33 form a signal peptide, tat-type signal; it reads MQVSRRQFFKICAGGMAGTTAAALGFAPSVALA. Positions 43 to 106 constitute a 4Fe-4S Mo/W bis-MGD-type domain; that stretch reads TRETRNTCTY…GLVDFIHSES (64 aa). C50, C53, C57, and C92 together coordinate [4Fe-4S] cluster. Residue U196 is a non-standard amino acid, selenocysteine.

Belongs to the prokaryotic molybdopterin-containing oxidoreductase family. Formate dehydrogenase is a membrane-bound complex, formed by subunits alpha, beta and gamma. Mo-bis(molybdopterin guanine dinucleotide) is required as a cofactor. The cofactor is [4Fe-4S] cluster. Exported by the Tat system. The position of the signal peptide cleavage has not been experimentally proven.

Its subcellular location is the periplasm. It carries out the reaction formate + NAD(+) = CO2 + NADH. Its function is as follows. Allows to use formate as major electron donor during aerobic respiration. Subunit alpha possibly forms the active site. The polypeptide is Formate dehydrogenase-O major subunit (fdoG) (Escherichia coli (strain K12)).